Reading from the N-terminus, the 236-residue chain is Sugar fermentation stimulation protein homolog (236 aa).

The protein belongs to the SfsA family.

This chain is Sugar fermentation stimulation protein homolog, found in Paramagnetospirillum magneticum (strain ATCC 700264 / AMB-1) (Magnetospirillum magneticum).